Reading from the N-terminus, the 272-residue chain is Cyclase-like protein 2 (272 aa).

Residues 1 to 17 (MAHLATVVLLLVAAARQ) form the signal peptide.

It belongs to the Cyclase 1 superfamily. As to expression, highly expressed in leaf sheaths and flag leaves. Expressed in roots, stems, leaf collars, glumes, young panicles and pistils.

It is found in the secreted. The protein localises to the extracellular space. The protein resides in the extracellular matrix. May be involved in response to stresses. This chain is Cyclase-like protein 2, found in Oryza sativa subsp. japonica (Rice).